The chain runs to 452 residues: Cobyrinate a,c-diamide synthase (452 aa).

Residues 248-441 (RVAYALDAAF…LHIHFYQNLL (194 aa)) enclose the GATase cobBQ-type domain. Cysteine 330 (nucleophile) is an active-site residue.

This sequence belongs to the CobB/CbiA family. Mg(2+) serves as cofactor.

The catalysed reaction is cob(II)yrinate + 2 L-glutamine + 2 ATP + 2 H2O = cob(II)yrinate a,c diamide + 2 L-glutamate + 2 ADP + 2 phosphate + 2 H(+). It functions in the pathway cofactor biosynthesis; adenosylcobalamin biosynthesis; cob(II)yrinate a,c-diamide from sirohydrochlorin (anaerobic route): step 10/10. Its function is as follows. Catalyzes the ATP-dependent amidation of the two carboxylate groups at positions a and c of cobyrinate, using either L-glutamine or ammonia as the nitrogen source. The sequence is that of Cobyrinate a,c-diamide synthase from Listeria monocytogenes serotype 4b (strain F2365).